A 455-amino-acid chain; its full sequence is Enolase (455 aa).

Gln-166 is a (2R)-2-phosphoglycerate binding site. Glu-208 (proton donor) is an active-site residue. Positions 249, 311, and 338 each coordinate Mg(2+). (2R)-2-phosphoglycerate is bound by residues Lys-363, Arg-392, Ser-393, and Lys-414. Lys-363 functions as the Proton acceptor in the catalytic mechanism.

Belongs to the enolase family. Requires Mg(2+) as cofactor.

The protein resides in the cytoplasm. Its subcellular location is the secreted. It is found in the cell surface. The enzyme catalyses (2R)-2-phosphoglycerate = phosphoenolpyruvate + H2O. It participates in carbohydrate degradation; glycolysis; pyruvate from D-glyceraldehyde 3-phosphate: step 4/5. In terms of biological role, catalyzes the reversible conversion of 2-phosphoglycerate (2-PG) into phosphoenolpyruvate (PEP). It is essential for the degradation of carbohydrates via glycolysis. The protein is Enolase of Mycoplasma mobile (strain ATCC 43663 / 163K / NCTC 11711) (Mesomycoplasma mobile).